The primary structure comprises 137 residues: Peptide methionine sulfoxide reductase MsrB (137 aa).

The region spanning 7–129 (AEELKKNLSE…NSASLRFTDG (123 aa)) is the MsrB domain. Zn(2+) contacts are provided by cysteine 46, cysteine 49, cysteine 95, and cysteine 98. Catalysis depends on cysteine 118, which acts as the Nucleophile.

This sequence belongs to the MsrB Met sulfoxide reductase family. Zn(2+) is required as a cofactor.

The catalysed reaction is L-methionyl-[protein] + [thioredoxin]-disulfide + H2O = L-methionyl-(R)-S-oxide-[protein] + [thioredoxin]-dithiol. The polypeptide is Peptide methionine sulfoxide reductase MsrB (Escherichia coli O8 (strain IAI1)).